Reading from the N-terminus, the 652-residue chain is Chaperone protein HtpG (652 aa).

The a; substrate-binding stretch occupies residues 1 to 351 (MTEHVEQLEF…AQDLSLNVSR (351 aa)). Residues 352 to 568 (EILQQDRQIQ…VFDFTPMLER (217 aa)) form a b region. The tract at residues 569–652 (MYRASGQPVP…ILTDRLTRTL (84 aa)) is c.

Belongs to the heat shock protein 90 family. In terms of assembly, homodimer.

The protein localises to the cytoplasm. Functionally, molecular chaperone. Has ATPase activity. In Nocardia farcinica (strain IFM 10152), this protein is Chaperone protein HtpG.